The following is a 244-amino-acid chain: DNA polymerase sliding clamp (244 aa).

It belongs to the PCNA family. In terms of assembly, homotrimer. The subunits circularize to form a toroid; DNA passes through its center. Replication factor C (RFC) is required to load the toroid on the DNA.

Sliding clamp subunit that acts as a moving platform for DNA processing. Responsible for tethering the catalytic subunit of DNA polymerase and other proteins to DNA during high-speed replication. This Methanothrix thermoacetophila (strain DSM 6194 / JCM 14653 / NBRC 101360 / PT) (Methanosaeta thermophila) protein is DNA polymerase sliding clamp.